The sequence spans 383 residues: Cell division protein FtsZ (383 aa).

GTP contacts are provided by residues 20-24, 107-109, E138, R142, and N186; these read GGGGN and GTG.

The protein belongs to the FtsZ family. Homodimer. Polymerizes to form a dynamic ring structure in a strictly GTP-dependent manner. Interacts directly with several other division proteins.

It is found in the cytoplasm. Its function is as follows. Essential cell division protein that forms a contractile ring structure (Z ring) at the future cell division site. The regulation of the ring assembly controls the timing and the location of cell division. One of the functions of the FtsZ ring is to recruit other cell division proteins to the septum to produce a new cell wall between the dividing cells. Binds GTP and shows GTPase activity. This chain is Cell division protein FtsZ, found in Escherichia coli O157:H7.